We begin with the raw amino-acid sequence, 741 residues long: Polyribonucleotide nucleotidyltransferase (741 aa).

Positions 489 and 495 each coordinate Mg(2+). The KH domain occupies 556 to 615 (PKIDSIQIPVDKIKVVIGKGGETIDKIIAETGVTIDIDEEGLVQIFSSDQDAIDRAKTII). An S1 motif domain is found at 625 to 693 (GEVYTVPVVR…EKGRVDASIK (69 aa)). A disordered region spans residues 696 to 741 (LPKPEKNEDGENGEEHRHCCCSHHKPDHHSESMEAPKKSDESETKE). Composition is skewed to basic and acidic residues over residues 698 to 713 (KPEK…EHRH) and 723 to 741 (HHSE…ETKE).

This sequence belongs to the polyribonucleotide nucleotidyltransferase family. Mg(2+) is required as a cofactor.

It localises to the cytoplasm. The enzyme catalyses RNA(n+1) + phosphate = RNA(n) + a ribonucleoside 5'-diphosphate. In terms of biological role, involved in mRNA degradation. Catalyzes the phosphorolysis of single-stranded polyribonucleotides processively in the 3'- to 5'-direction. The chain is Polyribonucleotide nucleotidyltransferase from Streptococcus thermophilus (strain ATCC BAA-491 / LMD-9).